A 267-amino-acid chain; its full sequence is MGQKINPHGFRLGITTDWKSRWYADKQYADYVKEDVAIRKLLATGMERAGISKVEIERTRDRVRVDIHTARPGIVIGRRGAEADRIRAELEKLTGKQVQLNILEVKNPESDAQLVAQGVAEQLSNRVAFRRAMRKAIQSAMRSPNVKGIRVQCSGRLGGAEMSRSEFYREGRVPLHTLRADIDYGLYEAKTTFGRIGVKVWIYKGDIVGGKRELTAASAPAGDRDRPRRERPSRPRRSGSTGTTATSTEAGRAATAVVEAPAENQEG.

The KH type-2 domain maps to 38–106; the sequence is IRKLLATGME…QVQLNILEVK (69 aa). The disordered stretch occupies residues 215–267; it reads TAASAPAGDRDRPRRERPSRPRRSGSTGTTATSTEAGRAATAVVEAPAENQEG. Basic and acidic residues predominate over residues 222–233; sequence GDRDRPRRERPS. Positions 238–256 are enriched in low complexity; that stretch reads SGSTGTTATSTEAGRAATA.

It belongs to the universal ribosomal protein uS3 family. As to quaternary structure, part of the 30S ribosomal subunit. Forms a tight complex with proteins S10 and S14.

Binds the lower part of the 30S subunit head. Binds mRNA in the 70S ribosome, positioning it for translation. In Nocardia farcinica (strain IFM 10152), this protein is Small ribosomal subunit protein uS3.